The chain runs to 220 residues: Telomere repeats-binding bouquet formation protein 2 (220 aa).

It belongs to the TERB2 family. Component of the MAJIN-TERB1-TERB2 complex, composed of MAJIN, TERB1 and TERB2.

It is found in the chromosome. Its subcellular location is the telomere. The protein localises to the nucleus inner membrane. Functionally, meiosis-specific telomere-associated protein involved in meiotic telomere attachment to the nucleus inner membrane, a crucial step for homologous pairing and synapsis. Component of the MAJIN-TERB1-TERB2 complex, which promotes telomere cap exchange by mediating attachment of telomeric DNA to the inner nuclear membrane and replacement of the protective cap of telomeric chromosomes: in early meiosis, the MAJIN-TERB1-TERB2 complex associates with telomeric DNA and the shelterin/telosome complex. During prophase, the complex matures and promotes release of the shelterin/telosome complex from telomeric DNA. This chain is Telomere repeats-binding bouquet formation protein 2 (TERB2), found in Homo sapiens (Human).